The chain runs to 434 residues: Enolase (434 aa).

Residue Gln-163 participates in (2R)-2-phosphoglycerate binding. Glu-205 serves as the catalytic Proton donor. Residues Asp-242, Glu-291, and Asp-318 each coordinate Mg(2+). (2R)-2-phosphoglycerate is bound by residues Lys-343, Arg-372, Ser-373, and Lys-394. Residue Lys-343 is the Proton acceptor of the active site.

This sequence belongs to the enolase family. It depends on Mg(2+) as a cofactor.

It is found in the cytoplasm. Its subcellular location is the secreted. The protein resides in the cell surface. It carries out the reaction (2R)-2-phosphoglycerate = phosphoenolpyruvate + H2O. It functions in the pathway carbohydrate degradation; glycolysis; pyruvate from D-glyceraldehyde 3-phosphate: step 4/5. In terms of biological role, catalyzes the reversible conversion of 2-phosphoglycerate (2-PG) into phosphoenolpyruvate (PEP). It is essential for the degradation of carbohydrates via glycolysis. The chain is Enolase from Streptococcus pneumoniae serotype 19F (strain G54).